A 175-amino-acid polypeptide reads, in one-letter code: Large ribosomal subunit protein bL9 (175 aa).

It belongs to the bacterial ribosomal protein bL9 family.

Functionally, binds to the 23S rRNA. The sequence is that of Large ribosomal subunit protein bL9 from Orientia tsutsugamushi (strain Boryong) (Rickettsia tsutsugamushi).